We begin with the raw amino-acid sequence, 275 residues long: Ribosomal RNA small subunit methyltransferase A (275 aa).

Residues asparagine 21, leucine 23, glycine 48, glutamate 69, aspartate 94, and asparagine 115 each coordinate S-adenosyl-L-methionine.

Belongs to the class I-like SAM-binding methyltransferase superfamily. rRNA adenine N(6)-methyltransferase family. RsmA subfamily.

The protein resides in the cytoplasm. The catalysed reaction is adenosine(1518)/adenosine(1519) in 16S rRNA + 4 S-adenosyl-L-methionine = N(6)-dimethyladenosine(1518)/N(6)-dimethyladenosine(1519) in 16S rRNA + 4 S-adenosyl-L-homocysteine + 4 H(+). Specifically dimethylates two adjacent adenosines (A1518 and A1519) in the loop of a conserved hairpin near the 3'-end of 16S rRNA in the 30S particle. May play a critical role in biogenesis of 30S subunits. The chain is Ribosomal RNA small subunit methyltransferase A from Clostridium botulinum (strain ATCC 19397 / Type A).